The chain runs to 325 residues: Aldo-keto reductase family 1 member A1 (325 aa).

Residue threonine 2 is modified to N-acetylthreonine. Serine 4 carries the phosphoserine modification. NADP(+)-binding positions include 11–20 (GQKMPLIGLG), threonine 21, and tryptophan 22. Serine 38 bears the Phosphoserine mark. Aspartate 45 is a binding site for NADP(+). The active-site Proton donor is the tyrosine 50. N6-acetyllysine; alternate is present on lysine 127. Position 127 is an N6-succinyllysine; alternate (lysine 127). Position 145 is an N6-succinyllysine (lysine 145). Positions 162, 163, 211, 213, 215, 216, 263, 264, 265, 269, 272, and 273 each coordinate NADP(+). Phosphoserine is present on serine 211.

It belongs to the aldo/keto reductase family. In terms of assembly, monomer. Widely expressed.

It localises to the cytoplasm. Its subcellular location is the cytosol. It is found in the apical cell membrane. The catalysed reaction is a primary alcohol + NADP(+) = an aldehyde + NADPH + H(+). It carries out the reaction L-gulonate + NADP(+) = aldehydo-D-glucuronate + NADPH + H(+). It catalyses the reaction L-gulono-1,4-lactone + NADP(+) = D-glucurono-3,6-lactone + NADPH + H(+). The enzyme catalyses allyl alcohol + NADP(+) = acrolein + NADPH + H(+). The catalysed reaction is glycerol + NADP(+) = D-glyceraldehyde + NADPH + H(+). It carries out the reaction glycerol + NADP(+) = L-glyceraldehyde + NADPH + H(+). It catalyses the reaction hydroxyacetone + NADP(+) = methylglyoxal + NADPH + H(+). The enzyme catalyses 3-deoxyfructose + NADP(+) = 3-deoxyglucosone + NADPH + H(+). The catalysed reaction is (R)-mevalonate + NADP(+) = (R)-mevaldate + NADPH + H(+). It carries out the reaction pyridine 3-methanol + NADP(+) = pyridine-3-carbaldehyde + NADPH + H(+). It catalyses the reaction S-nitroso-CoA + NADPH + H(+) = sulfinamide-CoA + NADP(+). The enzyme catalyses S-nitrosoglutathione + NADPH + H(+) = S-(hydroxysulfenamide)glutathione + NADP(+). Functionally, catalyzes the NADPH-dependent reduction of a wide variety of carbonyl-containing compounds to their corresponding alcohols. Displays enzymatic activity towards endogenous metabolites such as aromatic and aliphatic aldehydes, ketones, monosaccharides and bile acids, with a preference for negatively charged substrates, such as glucuronate and succinic semialdehyde. Plays an important role in ascorbic acid biosynthesis by catalyzing the reduction of D-glucuronic acid and D-glucurono-gamma-lactone. Functions as a detoxifiying enzyme by reducing a range of toxic aldehydes. Reduces methylglyoxal and 3-deoxyglucosone, which are present at elevated levels under hyperglycemic conditions and are cytotoxic. Involved in the detoxification of lipid-derived aldehydes like acrolein. Plays a role in the activation of procarcinogens, such as polycyclic aromatic hydrocarbon trans-dihydrodiols, and in the metabolism of various xenobiotics and drugs. Also acts as an inhibitor of protein S-nitrosylation by mediating degradation of S-nitroso-coenzyme A (S-nitroso-CoA), a cofactor required to S-nitrosylate proteins. S-nitroso-CoA reductase activity is involved in reprogramming intermediary metabolism in renal proximal tubules, notably by inhibiting protein S-nitrosylation of isoform 2 of PKM (PKM2). Also acts as a S-nitroso-glutathione reductase by catalyzing the NADPH-dependent reduction of S-nitrosoglutathione. Displays no reductase activity towards retinoids. The polypeptide is Aldo-keto reductase family 1 member A1 (Mus musculus (Mouse)).